Here is a 248-residue protein sequence, read N- to C-terminus: Large ribosomal subunit protein uL10m (248 aa).

The N-terminal 24 residues, M1–F24, are a transit peptide targeting the mitochondrion.

It belongs to the universal ribosomal protein uL10 family. As to quaternary structure, component of the mitochondrial ribosome large subunit (39S) which comprises a 16S rRNA and about 50 distinct proteins.

Its subcellular location is the mitochondrion. The chain is Large ribosomal subunit protein uL10m (mRpL10) from Drosophila melanogaster (Fruit fly).